The following is a 404-amino-acid chain: Glucose-1-phosphate adenylyltransferase 2 (404 aa).

Residues Y97, G162, 177–178, and S195 each bind alpha-D-glucose 1-phosphate; that span reads EK.

It belongs to the bacterial/plant glucose-1-phosphate adenylyltransferase family. As to quaternary structure, homotetramer.

It catalyses the reaction alpha-D-glucose 1-phosphate + ATP + H(+) = ADP-alpha-D-glucose + diphosphate. Its pathway is glycan biosynthesis; glycogen biosynthesis. Its function is as follows. Involved in the biosynthesis of ADP-glucose, a building block required for the elongation reactions to produce glycogen. Catalyzes the reaction between ATP and alpha-D-glucose 1-phosphate (G1P) to produce pyrophosphate and ADP-Glc. This is Glucose-1-phosphate adenylyltransferase 2 from Vibrio vulnificus (strain YJ016).